Consider the following 76-residue polypeptide: Exodeoxyribonuclease 7 small subunit (76 aa).

This sequence belongs to the XseB family. In terms of assembly, heterooligomer composed of large and small subunits.

Its subcellular location is the cytoplasm. It catalyses the reaction Exonucleolytic cleavage in either 5'- to 3'- or 3'- to 5'-direction to yield nucleoside 5'-phosphates.. Its function is as follows. Bidirectionally degrades single-stranded DNA into large acid-insoluble oligonucleotides, which are then degraded further into small acid-soluble oligonucleotides. The protein is Exodeoxyribonuclease 7 small subunit of Bacillus cytotoxicus (strain DSM 22905 / CIP 110041 / 391-98 / NVH 391-98).